Here is a 108-residue protein sequence, read N- to C-terminus: Transcription factor AmrZ (108 aa).

Functionally, functions both as a transcriptional activator and a repressor of multiple genes encoding virulence factors as well as genes involved in environmental adaptation. Represses genes involved in iron homeostasis. Modulates intracellular levels of c-di-GMP which in turn regulates swimming motility and biofilm formation. This Pseudomonas ogarae (strain DSM 112162 / CECT 30235 / F113) protein is Transcription factor AmrZ.